Consider the following 292-residue polypeptide: Ribosomal RNA small subunit methyltransferase I (292 aa).

It belongs to the methyltransferase superfamily. RsmI family.

Its subcellular location is the cytoplasm. It catalyses the reaction cytidine(1402) in 16S rRNA + S-adenosyl-L-methionine = 2'-O-methylcytidine(1402) in 16S rRNA + S-adenosyl-L-homocysteine + H(+). Its function is as follows. Catalyzes the 2'-O-methylation of the ribose of cytidine 1402 (C1402) in 16S rRNA. The chain is Ribosomal RNA small subunit methyltransferase I from Bacillus subtilis (strain 168).